We begin with the raw amino-acid sequence, 127 residues long: Glycine cleavage system H protein (127 aa).

One can recognise a Lipoyl-binding domain in the interval 24-105 (TALVGITDFA…YNDGWLVKMK (82 aa)). N6-lipoyllysine is present on lysine 65.

This sequence belongs to the GcvH family. In terms of assembly, the glycine cleavage system is composed of four proteins: P, T, L and H. (R)-lipoate serves as cofactor.

In terms of biological role, the glycine cleavage system catalyzes the degradation of glycine. The H protein shuttles the methylamine group of glycine from the P protein to the T protein. The sequence is that of Glycine cleavage system H protein from Pelodictyon phaeoclathratiforme (strain DSM 5477 / BU-1).